A 151-amino-acid chain; its full sequence is Small ribosomal subunit protein uS15 (151 aa).

Belongs to the universal ribosomal protein uS15 family.

This Candida maltosa (Yeast) protein is Small ribosomal subunit protein uS15 (RPS13).